The sequence spans 294 residues: Signal peptidase I (294 aa).

Residues 1–59 (MTETTDSPSERQPGPAEPELSSRDPDIAGQVFDAAPFDAAPDADSEGDSKAAKTDEPRP) are disordered. Residues 1 to 66 (MTETTDSPSE…PRPAKRSTLR (66 aa)) lie on the Cytoplasmic side of the membrane. Residues 47–59 (GDSKAAKTDEPRP) show a composition bias toward basic and acidic residues. The chain crosses the membrane as a helical span at residues 67–87 (EFAVLAVIAVVLYYVMLTFVA). The Extracellular portion of the chain corresponds to 88-294 (RPYLIPSESM…VRSVNPQQGR (207 aa)). Catalysis depends on residues S96 and K174.

Belongs to the peptidase S26 family.

The protein localises to the cell membrane. It carries out the reaction Cleavage of hydrophobic, N-terminal signal or leader sequences from secreted and periplasmic proteins.. The sequence is that of Signal peptidase I (lepB) from Mycobacterium tuberculosis (strain CDC 1551 / Oshkosh).